Reading from the N-terminus, the 392-residue chain is DNA replication and repair protein RecF (392 aa).

An ATP-binding site is contributed by 30–37 (GRNGFGKT).

Belongs to the RecF family.

It localises to the cytoplasm. Functionally, the RecF protein is involved in DNA metabolism; it is required for DNA replication and normal SOS inducibility. RecF binds preferentially to single-stranded, linear DNA. It also seems to bind ATP. The sequence is that of DNA replication and repair protein RecF from Corynebacterium aurimucosum (strain ATCC 700975 / DSM 44827 / CIP 107346 / CN-1) (Corynebacterium nigricans).